A 425-amino-acid chain; its full sequence is Intermediate conductance calcium-activated potassium channel protein 4 (425 aa).

Residues 30-50 (LVLAGTGIGLMVLHAEMLWFL) traverse the membrane as a helical segment. A helical membrane pass occupies residues 59-79 (LLVKCLITLSTAFLLCLIVVF). The helical transmembrane segment at 105–121 (VAQILLELLVCGVHPVP) threads the bilayer. Residues 141–161 (GFLGEGEALLSLAMLLRLYLV) form a helical membrane-spanning segment. Residues 205 to 225 (LLLGLTLGLWLTTAWVLSVAE) traverse the membrane as a helical segment. Residues 239–259 (LWLIPITFLTIGYGDVVPGTL) constitute an intramembrane region (pore-forming). The chain crosses the membrane as a helical span at residues 263 to 283 (IVCLCTGVMGVCCTALLVAVV). The tract at residues 284 to 345 (ARKLEFNKAE…RRHQRKMLAA (62 aa)) is calmodulin-binding. Phosphohistidine is present on His356.

This sequence belongs to the potassium channel KCNN family. KCa3.1/KCNN4 subfamily. As to quaternary structure, homodimer. Homotetramer. Heterotetramer of potassium channel proteins. Interacts with MTMR6; this interaction leads to selective dephosphorylation of PI(3)P in a lipid microdomain adjacent to KCNN4, resulting in a decrease of intermediate conductance calcium-activated potassium channel activity. Interacts (via the C-tail domain) with CALM1; the calmodulin binding is constitutive, does not require calcium and mediates calcium-dependent gating and four calmodulin molecules bind to one channel tetramer. Phosphorylation at His-356 by NDKB activates the intermediate conductance calcium-activated potassium channel activity, and conversely it's dephosphorylation by PHPT1 inhibits this activity.

Its subcellular location is the cell membrane. The protein resides in the cell projection. It is found in the ruffle membrane. It catalyses the reaction K(+)(in) = K(+)(out). Functionally, intermediate conductance calcium-activated potassium channel that mediates the voltage-independent transmembrane transfer of potassium across the cell membrane through a constitutive interaction with calmodulin which binds the intracellular calcium allowing its opening. The current is characterized by a voltage-independent activation, an intracellular calcium concentration increase-dependent activation and a single-channel conductance of about 25 picosiemens. Also presents an inwardly rectifying current, thus reducing its already small outward conductance of potassium ions, which is particularly the case when the membrane potential displays positive values, above + 20 mV. Controls calcium influx during vascular contractility by being responsible of membrane hyperpolarization induced by vasoactive factors in proliferative vascular smooth muscle cell types. Following calcium influx, the consecutive activation of KCNN4 channel leads to a hyperpolarization of the cell membrane potential and hence an increase of the electrical driving force for further calcium influx promoting sustained calcium entry in response to stimulation with chemotactic peptides. Required for maximal calcium influx and proliferation during the reactivation of naive T-cells. Plays a role in the late stages of EGF-induced macropinocytosis through activation by PI(3)P. The protein is Intermediate conductance calcium-activated potassium channel protein 4 of Rattus norvegicus (Rat).